A 364-amino-acid polypeptide reads, in one-letter code: tRNA 2-selenouridine synthase (364 aa).

Residues 14-137 (LIADTPIIDV…LRQTAIQATI (124 aa)) form the Rhodanese domain. Catalysis depends on cysteine 97, which acts as the S-selanylcysteine intermediate.

The protein belongs to the SelU family. In terms of assembly, monomer.

The enzyme catalyses 5-methylaminomethyl-2-thiouridine(34) in tRNA + selenophosphate + (2E)-geranyl diphosphate + H2O + H(+) = 5-methylaminomethyl-2-selenouridine(34) in tRNA + (2E)-thiogeraniol + phosphate + diphosphate. It carries out the reaction 5-methylaminomethyl-2-thiouridine(34) in tRNA + (2E)-geranyl diphosphate = 5-methylaminomethyl-S-(2E)-geranyl-thiouridine(34) in tRNA + diphosphate. The catalysed reaction is 5-methylaminomethyl-S-(2E)-geranyl-thiouridine(34) in tRNA + selenophosphate + H(+) = 5-methylaminomethyl-2-(Se-phospho)selenouridine(34) in tRNA + (2E)-thiogeraniol. It catalyses the reaction 5-methylaminomethyl-2-(Se-phospho)selenouridine(34) in tRNA + H2O = 5-methylaminomethyl-2-selenouridine(34) in tRNA + phosphate. Involved in the post-transcriptional modification of the uridine at the wobble position (U34) of tRNA(Lys), tRNA(Glu) and tRNA(Gln). Catalyzes the conversion of 2-thiouridine (S2U-RNA) to 2-selenouridine (Se2U-RNA). Acts in a two-step process involving geranylation of 2-thiouridine (S2U) to S-geranyl-2-thiouridine (geS2U) and subsequent selenation of the latter derivative to 2-selenouridine (Se2U) in the tRNA chain. In Shigella flexneri, this protein is tRNA 2-selenouridine synthase.